We begin with the raw amino-acid sequence, 46 residues long: Protein PsbN (46 aa).

A helical membrane pass occupies residues 10-30 (VAIAVLAALLGLTGFGVYTAF).

The protein belongs to the PsbN family.

Its subcellular location is the cellular thylakoid membrane. May play a role in photosystem I and II biogenesis. The protein is Protein PsbN of Synechococcus sp. (strain CC9311).